The chain runs to 565 residues: Sulfite reductase [NADPH] hemoprotein beta-component (565 aa).

Positions 429, 435, 474, and 478 each coordinate [4Fe-4S] cluster. Cys478 is a binding site for siroheme.

It belongs to the nitrite and sulfite reductase 4Fe-4S domain family. Alpha(8)-beta(8). The alpha component is a flavoprotein, the beta component is a hemoprotein. It depends on siroheme as a cofactor. The cofactor is [4Fe-4S] cluster.

The enzyme catalyses hydrogen sulfide + 3 NADP(+) + 3 H2O = sulfite + 3 NADPH + 4 H(+). The protein operates within sulfur metabolism; hydrogen sulfide biosynthesis; hydrogen sulfide from sulfite (NADPH route): step 1/1. In terms of biological role, component of the sulfite reductase complex that catalyzes the 6-electron reduction of sulfite to sulfide. This is one of several activities required for the biosynthesis of L-cysteine from sulfate. The polypeptide is Sulfite reductase [NADPH] hemoprotein beta-component (Shewanella sp. (strain MR-4)).